We begin with the raw amino-acid sequence, 699 residues long: Transketolase (699 aa).

H45 is a substrate binding site. Residues T48, H85, and 133-135 (GPL) each bind thiamine diphosphate. D177 is a binding site for Mg(2+). Residues G178 and N207 each contribute to the thiamine diphosphate site. The Mg(2+) site is built by N207 and I209. 3 residues coordinate substrate: H283, R378, and S405. Thiamine diphosphate is bound at residue H283. E441 (proton donor) is an active-site residue. Residue F467 coordinates thiamine diphosphate. Substrate contacts are provided by H491, D499, and R552.

It belongs to the transketolase family. As to quaternary structure, homodimer. It depends on Mg(2+) as a cofactor. The cofactor is Ca(2+). Mn(2+) serves as cofactor. Co(2+) is required as a cofactor. Requires thiamine diphosphate as cofactor.

It carries out the reaction D-sedoheptulose 7-phosphate + D-glyceraldehyde 3-phosphate = aldehydo-D-ribose 5-phosphate + D-xylulose 5-phosphate. Its function is as follows. Catalyzes the transfer of a two-carbon ketol group from a ketose donor to an aldose acceptor, via a covalent intermediate with the cofactor thiamine pyrophosphate. This chain is Transketolase (tkt), found in Mycobacterium leprae (strain TN).